The primary structure comprises 858 residues: Heat shock protein 105 kDa (858 aa).

An N-acetylserine modification is found at S2. K471 carries the post-translational modification N6-acetyllysine. Disordered stretches follow at residues 500-585 (KVPT…PPEA) and 801-858 (VTQP…MDLD). The span at 504–515 (EEEDGSSLEADM) shows a compositional bias: acidic residues. Phosphoserine occurs at positions 509 and 510. Polar residues predominate over residues 533 to 549 (QQDNSEAGTQPQVQTDG). Position 558 is a phosphoserine (S558). T562 is modified (phosphothreonine). Composition is skewed to basic and acidic residues over residues 564 to 585 (EESK…PPEA) and 806 to 815 (PKIESPKLER). The residue at position 810 (S810) is a Phosphoserine. Position 816 is a phosphothreonine (T816).

The protein belongs to the heat shock protein 70 family. As to quaternary structure, interacts with HSPA8/HSC70. Interacts with HSPA1A (via NBD) and HSPA1B (via NBD). Post-translationally, phosphorylation on Ser-509 may be important for regulation of the HSPA8/HSC70 chaperone activity. In terms of tissue distribution, expressed in neurons in the cerebrum and Purkinje cells in the cerebellum (at protein level). Expressed in testis and no expression or only low-level expression in liver, spleen, lung, and kidney (at protein level). Highly expressed in the brain and moderately expressed in lung, heart, thymus, spleen, liver, and small intestine.

It is found in the cytoplasm. The protein resides in the nucleus. In terms of biological role, acts as a nucleotide-exchange factor (NEF) for chaperone proteins HSPA1A and HSPA1B, promoting the release of ADP from HSPA1A/B thereby triggering client/substrate protein release. Prevents the aggregation of denatured proteins in cells under severe stress, on which the ATP levels decrease markedly. Inhibits HSPA8/HSC70 ATPase and chaperone activities. The chain is Heat shock protein 105 kDa (Hsph1) from Mus musculus (Mouse).